Here is a 446-residue protein sequence, read N- to C-terminus: UDP-N-acetylmuramoylalanine--D-glutamate ligase (446 aa).

An ATP-binding site is contributed by Gly-116–Thr-122.

It belongs to the MurCDEF family.

It localises to the cytoplasm. It carries out the reaction UDP-N-acetyl-alpha-D-muramoyl-L-alanine + D-glutamate + ATP = UDP-N-acetyl-alpha-D-muramoyl-L-alanyl-D-glutamate + ADP + phosphate + H(+). Its pathway is cell wall biogenesis; peptidoglycan biosynthesis. In terms of biological role, cell wall formation. Catalyzes the addition of glutamate to the nucleotide precursor UDP-N-acetylmuramoyl-L-alanine (UMA). The chain is UDP-N-acetylmuramoylalanine--D-glutamate ligase from Marinobacter nauticus (strain ATCC 700491 / DSM 11845 / VT8) (Marinobacter aquaeolei).